The primary structure comprises 134 residues: MEGFKRYVEVGRVVLVTKGEYTGKLAVIVDIVDHKRALIDSPCSEFPRQVIRYGSVVLTHIVMKLPRGARSGIVAKKWKAQDVCNKWASSAWAKKLEAKKVRSQLNDFDRFAVMRLKKQRREQVNVAVAKALKA.

The protein belongs to the eukaryotic ribosomal protein eL14 family. Component of the large ribosomal subunit (LSU). Mature yeast ribosomes consist of a small (40S) and a large (60S) subunit. The 40S small subunit contains 1 molecule of ribosomal RNA (18S rRNA) and at least 33 different proteins. The large 60S subunit contains 3 rRNA molecules (25S, 5.8S and 5S rRNA) and at least 46 different proteins.

It localises to the cytoplasm. It is found in the nucleus. Component of the ribosome, a large ribonucleoprotein complex responsible for the synthesis of proteins in the cell. The small ribosomal subunit (SSU) binds messenger RNAs (mRNAs) and translates the encoded message by selecting cognate aminoacyl-transfer RNA (tRNA) molecules. The large subunit (LSU) contains the ribosomal catalytic site termed the peptidyl transferase center (PTC), which catalyzes the formation of peptide bonds, thereby polymerizing the amino acids delivered by tRNAs into a polypeptide chain. The nascent polypeptides leave the ribosome through a tunnel in the LSU and interact with protein factors that function in enzymatic processing, targeting, and the membrane insertion of nascent chains at the exit of the ribosomal tunnel. The chain is Large ribosomal subunit protein eL14 (rpl14) from Schizosaccharomyces pombe (strain 972 / ATCC 24843) (Fission yeast).